Here is a 353-residue protein sequence, read N- to C-terminus: Protein arginine N-methyltransferase 1 (353 aa).

The region spanning lysine 32–arginine 353 is the SAM-dependent MTase PRMT-type domain. The S-adenosyl-L-methionine site is built by histidine 45, arginine 54, glycine 78, and glutamate 100. Lysine 116 carries the post-translational modification N6-succinyllysine. Residue lysine 127 forms a Glycyl lysine isopeptide (Lys-Gly) (interchain with G-Cter in ubiquitin) linkage. Glutamate 129 is an S-adenosyl-L-methionine binding site. Residues glutamate 144 and glutamate 153 contribute to the active site. N6-acetyllysine is present on residues lysine 210 and lysine 215. Phosphoserine occurs at positions 286 and 289.

Belongs to the class I-like SAM-binding methyltransferase superfamily. Protein arginine N-methyltransferase family. As to quaternary structure, homodimer and heterodimer with PRMT8. Homooctamer; individual homodimers associates to form a homooctamer. Interacts with NFATC2IP. Interacts with ILF3 and SUPT5H. Individual homodimers can associate to form a homohexamer. Interacts with FOXO1; the interaction methylates FOXO1, retaining it in the nucleus and increasing its transcriptional activity. Methylation of FOXO1 is increased with oxidative stress. Interacts with CHTOP; the interaction methylates CHTOP, enabling its interaction with the 5FMC complex. Interacts with BTG1, BTG2 and IFNAR1. Interacts with and probably methylates ATXN2L. Component of the methylosome, a 20S complex containing at least CLNS1A/pICln, PRMT5/SKB1, WDR77/MEP50, PRMT1 and ERH. Interacts with DHX9 (via RGG region). Interacts (via N-terminus) with HABP4. Interacts with MAP3K5/ASK1; the interaction results in MAP3K5 methylation by PRMT1 which inhibits MAP3K5 activation. Interacts with TRIM48; the interaction results in ubiquitination of PRMT1 by TRIM48, leading to PRMT1 proteasomal degradation and activation of MAP3K5. Interacts with GATOR1 complex; this interaction is S-adenosyl-L-methionine (SAM) dependent and is perturbated by SAMTOR in a SAM-sensitive manner. Interacts with GFI1; promoting recognition and binding of MRE11 and TP53BP1 substrates by PRMT1. Polyubiquitinated at Lys-127 by the SCF(FBXL17) complex, leading to its subsequent degradation. Ubiquitination is regulated by acetylation at Lys-210 and Lys-215. Polyubiquitinated by E3 ubiquitin-protein ligase TRIM48, leading to suppression of MAP3K5/ASK1 methylation and subsequent MAP3K5 activation. Post-translationally, acetylation at Lys-210 and Lys-215 regulates ubiquitination by the SCF(FBXL17) complex. Acetylated at Lys-215 by p300/EP300. Deacetylated at Lys-210 and Lys-215 by SIRT1. In terms of tissue distribution, ubiquitous.

The protein resides in the nucleus. The protein localises to the nucleoplasm. It is found in the cytoplasm. It localises to the cytosol. Its subcellular location is the lysosome membrane. It catalyses the reaction L-arginyl-[protein] + 2 S-adenosyl-L-methionine = N(omega),N(omega)-dimethyl-L-arginyl-[protein] + 2 S-adenosyl-L-homocysteine + 2 H(+). The catalysed reaction is L-arginyl-[protein] + S-adenosyl-L-methionine = N(omega)-methyl-L-arginyl-[protein] + S-adenosyl-L-homocysteine + H(+). The enzyme catalyses N(omega)-methyl-L-arginyl-[protein] + S-adenosyl-L-methionine = N(omega),N(omega)-dimethyl-L-arginyl-[protein] + S-adenosyl-L-homocysteine + H(+). In terms of biological role, arginine methyltransferase that methylates (mono and asymmetric dimethylation) the guanidino nitrogens of arginyl residues present in proteins such as ESR1, histone H2, H3 and H4, FMR1, ILF3, HNRNPA1, HNRNPD, NFATC2IP, SUPT5H, TAF15, EWS, HABP4, SERBP1, RBM15, FOXO1, CHTOP, MAP3K5/ASK1 and MICU1. Constitutes the main enzyme that mediates monomethylation and asymmetric dimethylation of histone H4 'Arg-3' (H4R3me1 and H4R3me2a, respectively), a specific tag for epigenetic transcriptional activation. May be involved in the regulation of TAF15 transcriptional activity, act as an activator of estrogen receptor (ER)-mediated transactivation, play a key role in neurite outgrowth and act as a negative regulator of megakaryocytic differentiation, by modulating p38 MAPK pathway. Methylates RBM15, promoting ubiquitination and degradation of RBM15. Methylates MRE11 and TP53BP1, promoting the DNA damage response. Methylates FOXO1 and retains it in the nucleus increasing its transcriptional activity. Methylates CHTOP and this methylation is critical for its 5-hydroxymethylcytosine (5hmC)-binding activity. Methylates MAP3K5/ASK1 at 'Arg-85' and 'Arg-87' which promotes association of MAP3K5 with thioredoxin and negatively regulates MAP3K5 association with TRAF2, inhibiting MAP3K5 stimulation and MAP3K5-induced activation of JNK. Methylates H4R3 in genes involved in glioblastomagenesis in a CHTOP- and/or TET1-dependent manner. Plays a role in regulating alternative splicing in the heart. Methylates NPRL2 at 'Arg-78' leading to inhibition of its GTPase activator activity and then the GATOR1 complex and consequently inducing timely mTORC1 activation under methionine-sufficient conditions. This chain is Protein arginine N-methyltransferase 1, found in Rattus norvegicus (Rat).